The primary structure comprises 503 residues: Lysine--tRNA ligase (503 aa).

Glu-413 and Glu-420 together coordinate Mg(2+).

This sequence belongs to the class-II aminoacyl-tRNA synthetase family. As to quaternary structure, homodimer. Requires Mg(2+) as cofactor.

It is found in the cytoplasm. The enzyme catalyses tRNA(Lys) + L-lysine + ATP = L-lysyl-tRNA(Lys) + AMP + diphosphate. This chain is Lysine--tRNA ligase, found in Mannheimia succiniciproducens (strain KCTC 0769BP / MBEL55E).